The following is a 260-amino-acid chain: UPF0246 protein APP7_0648 (260 aa).

It belongs to the UPF0246 family.

The protein is UPF0246 protein APP7_0648 of Actinobacillus pleuropneumoniae serotype 7 (strain AP76).